The following is a 554-amino-acid chain: Inactive serine/threonine-protein kinase/endoribonuclease IRE1-like (554 aa).

Residues 1–17 (MWLLAISLVGLLVVVVC) form the signal peptide. The tract at residues 36–85 (KRDKNSAPRVSASGEDGTKNEQVEKKSDPSGGLGEENEKTNSESKVLSVP) is disordered. The segment covering 51–63 (DGTKNEQVEKKSD) has biased composition (basic and acidic residues). Residues 121 to 408 (LVSTNEMKYG…ATQVLLHPLF (288 aa)) form the Protein kinase domain. Position 150 (K150) interacts with ATP. In terms of domain architecture, KEN spans 411-554 (SEKRLFFLRE…GEEAFEKYFN (144 aa)).

Belongs to the protein kinase superfamily. Ser/Thr protein kinase family.

The polypeptide is Inactive serine/threonine-protein kinase/endoribonuclease IRE1-like (Arabidopsis thaliana (Mouse-ear cress)).